Here is a 277-residue protein sequence, read N- to C-terminus: Glycerol-3-phosphate acyltransferase (277 aa).

5 consecutive transmembrane segments (helical) span residues 3–23 (LFIF…AIIV), 55–75 (IMVM…AKLL), 79–99 (PVTV…PVFF), 111–131 (IGAL…TWLL), and 155–175 (LILV…ILVL). A disordered region spans residues 207–277 (SPATSAEQEF…PKTKTVKEKE (71 aa)). A compositionally biased stretch (basic and acidic residues) spans 216–239 (FPGKEVIDTNIDETEKTEQAEAVK). Composition is skewed to basic residues over residues 240–253 (KPKA…AKKT) and 262–271 (KPRSTKPKTK).

The protein belongs to the PlsY family. In terms of assembly, probably interacts with PlsX.

It is found in the cell inner membrane. It catalyses the reaction an acyl phosphate + sn-glycerol 3-phosphate = a 1-acyl-sn-glycero-3-phosphate + phosphate. It participates in lipid metabolism; phospholipid metabolism. In terms of biological role, catalyzes the transfer of an acyl group from acyl-phosphate (acyl-PO(4)) to glycerol-3-phosphate (G3P) to form lysophosphatidic acid (LPA). This enzyme utilizes acyl-phosphate as fatty acyl donor, but not acyl-CoA or acyl-ACP. The polypeptide is Glycerol-3-phosphate acyltransferase (Legionella pneumophila (strain Paris)).